We begin with the raw amino-acid sequence, 289 residues long: Rhodopsin (289 aa).

The Extracellular segment spans residues 1-7; that stretch reads YLVNPAG. A helical membrane pass occupies residues 8–32; it reads YAALGAYMFLLILIGSPVNFLTLYV. At 33 to 44 the chain is on the cytoplasmic side; it reads TLEHKKLRTPLN. Residues 45–67 form a helical membrane-spanning segment; the sequence is YILLNLAVADLFMVLGGFTTTMY. At 68–81 the chain is on the extracellular side; that stretch reads TSMHGYSVLGRLGC. Cys-81 and Cys-158 are joined by a disulfide. Residues 82 to 104 traverse the membrane as a helical segment; that stretch reads ILEGFFATLGGEIALWSLVVLAI. The 'Ionic lock' involved in activated form stabilization motif lies at 105–107; sequence ERW. At 105-123 the chain is on the cytoplasmic side; the sequence is ERWIVVCKPISNFRFTEDH. Residues 124–144 traverse the membrane as a helical segment; that stretch reads AIMGLAFSWVMALACAVPPLV. Topologically, residues 145–173 are extracellular; it reads GWSRYIPEGMQCSCGVDYYTRAEGFNNES. Residue Asn-171 is glycosylated (N-linked (GlcNAc...) asparagine). The helical transmembrane segment at 174 to 195 threads the bilayer; the sequence is FVIYMFIVHFLIPLSVIFFCYG. Topologically, residues 196-223 are cytoplasmic; it reads RLLCAVKEAAAAQQESETTQRPEKEVTR. A helical membrane pass occupies residues 224–245; that stretch reads MVVIMVIAFLVCCLPNASVAWW. Residues 246–257 lie on the Extracellular side of the membrane; it reads IFCNQGSDFGPI. The chain crosses the membrane as a helical span at residues 258–279; the sequence is FMTLPSFFAKSAAIYNPMIYIC. Lys-267 bears the N6-(retinylidene)lysine mark. Topologically, residues 280–289 are cytoplasmic; sequence MNKQFRHCMI.

The protein belongs to the G-protein coupled receptor 1 family. Opsin subfamily. In terms of processing, phosphorylated on some or all of the serine and threonine residues present in the C-terminal region. Post-translationally, contains one covalently linked retinal chromophore.

The protein resides in the membrane. It localises to the cell projection. Its subcellular location is the cilium. It is found in the photoreceptor outer segment. In terms of biological role, photoreceptor required for image-forming vision at low light intensity. While most salt water fish species use retinal as chromophore, most freshwater fish use 3-dehydroretinal, or a mixture of retinal and 3-dehydroretinal. Light-induced isomerization of 11-cis to all-trans retinal triggers a conformational change that activates signaling via G-proteins. Subsequent receptor phosphorylation mediates displacement of the bound G-protein alpha subunit by arrestin and terminates signaling. This is Rhodopsin (rho) from Limnocottus bergianus.